We begin with the raw amino-acid sequence, 246 residues long: Trypsin V-A (246 aa).

Positions 1-15 (MKICIFFTLLGTVAA) are cleaved as a signal peptide. A propeptide spans 16 to 24 (FPTEDNDDR) (activation peptide). The Peptidase S1 domain maps to 25 to 244 (IVGGYTCQEH…YLNWIHQTIA (220 aa)). Disulfide bonds link C31–C160, C49–C65, C133–C233, C140–C206, C171–C185, and C196–C220. Catalysis depends on H64, which acts as the Charge relay system. Residues E76, N78, and E86 each coordinate Ca(2+). D108 functions as the Charge relay system in the catalytic mechanism. Catalysis depends on S200, which acts as the Charge relay system.

Belongs to the peptidase S1 family. Ca(2+) is required as a cofactor.

It localises to the secreted. Its subcellular location is the extracellular space. It catalyses the reaction Preferential cleavage: Arg-|-Xaa, Lys-|-Xaa.. This Rattus norvegicus (Rat) protein is Trypsin V-A.